Here is a 692-residue protein sequence, read N- to C-terminus: Glycine--tRNA ligase beta subunit (692 aa).

It belongs to the class-II aminoacyl-tRNA synthetase family. Tetramer of two alpha and two beta subunits.

It is found in the cytoplasm. The enzyme catalyses tRNA(Gly) + glycine + ATP = glycyl-tRNA(Gly) + AMP + diphosphate. This chain is Glycine--tRNA ligase beta subunit, found in Hahella chejuensis (strain KCTC 2396).